A 134-amino-acid chain; its full sequence is Holo-[acyl-carrier-protein] synthase (134 aa).

Residues Asp8 and Glu57 each contribute to the Mg(2+) site.

It belongs to the P-Pant transferase superfamily. AcpS family. It depends on Mg(2+) as a cofactor.

The protein resides in the cytoplasm. It catalyses the reaction apo-[ACP] + CoA = holo-[ACP] + adenosine 3',5'-bisphosphate + H(+). In terms of biological role, transfers the 4'-phosphopantetheine moiety from coenzyme A to a Ser of acyl-carrier-protein. The chain is Holo-[acyl-carrier-protein] synthase from Rhizobium etli (strain CIAT 652).